The sequence spans 369 residues: Probable dual-specificity RNA methyltransferase RlmN (369 aa).

Glu106 functions as the Proton acceptor in the catalytic mechanism. The Radical SAM core domain occupies Glu118–Asp354. Cys125 and Cys359 are disulfide-bonded. 3 residues coordinate [4Fe-4S] cluster: Cys132, Cys136, and Cys139. Residues Gly183–Glu184, Ser215, Ser238–His240, and Asn316 each bind S-adenosyl-L-methionine. The active-site S-methylcysteine intermediate is the Cys359.

Belongs to the radical SAM superfamily. RlmN family. [4Fe-4S] cluster is required as a cofactor.

The protein localises to the cytoplasm. It catalyses the reaction adenosine(2503) in 23S rRNA + 2 reduced [2Fe-2S]-[ferredoxin] + 2 S-adenosyl-L-methionine = 2-methyladenosine(2503) in 23S rRNA + 5'-deoxyadenosine + L-methionine + 2 oxidized [2Fe-2S]-[ferredoxin] + S-adenosyl-L-homocysteine. It carries out the reaction adenosine(37) in tRNA + 2 reduced [2Fe-2S]-[ferredoxin] + 2 S-adenosyl-L-methionine = 2-methyladenosine(37) in tRNA + 5'-deoxyadenosine + L-methionine + 2 oxidized [2Fe-2S]-[ferredoxin] + S-adenosyl-L-homocysteine. In terms of biological role, specifically methylates position 2 of adenine 2503 in 23S rRNA and position 2 of adenine 37 in tRNAs. The chain is Probable dual-specificity RNA methyltransferase RlmN from Salinibacter ruber (strain DSM 13855 / M31).